The primary structure comprises 659 residues: Cytochrome bo(3) ubiquinol oxidase subunit 1 (659 aa).

The Extracellular portion of the chain corresponds to Met-1 to Asp-14. A helical transmembrane segment spans residues Pro-15 to Ile-35. Over Thr-36–Lys-56 the chain is Cytoplasmic. Residues Ile-57–Ile-77 form a helical membrane-spanning segment. A ubiquinone-binding residues include Arg-71, Asp-75, and His-101. Over Met-78–His-109 the chain is Extracellular. A heme b-binding site is contributed by His-109. Residues Gly-110 to Val-130 traverse the membrane as a helical segment. The Cytoplasmic portion of the chain corresponds to Pro-131 to Ser-148. Residues Leu-149 to Ala-169 form a helical membrane-spanning segment. At Gln-170–Tyr-192 the chain is on the extracellular side. Trp-173 lines the heme b pocket. The helical transmembrane segment at Trp-193–Val-213 threads the bilayer. At Thr-214–Ser-235 the chain is on the cytoplasmic side. The helical transmembrane segment at Phe-236–Leu-256 threads the bilayer. Residues Thr-257 to Asn-280 are Extracellular-facing. A helical membrane pass occupies residues Leu-281–Phe-301. His-287 lines the Cu(2+) pocket. Positions His-287–Tyr-291 form a cross-link, 1'-histidyl-3'-tyrosine (His-Tyr). Tyr-291 is a Fe(II)-heme o binding site. The Cytoplasmic segment spans residues Ser-302–Ser-318. A helical membrane pass occupies residues Leu-319–Phe-339. Residues His-336 and His-337 each coordinate Cu(2+). The Extracellular portion of the chain corresponds to Thr-340–Phe-350. The helical transmembrane segment at Phe-351–Phe-371 threads the bilayer. Residues Thr-372 to Ser-382 are Cytoplasmic-facing. The chain crosses the membrane as a helical span at residues Ile-383–Leu-403. Residues Leu-404 to Ser-416 lie on the Extracellular side of the membrane. Fe(II)-heme o is bound by residues His-414 and His-422. A helical membrane pass occupies residues Leu-417 to Ala-437. His-424 contacts heme b. Residues Gly-438–Ala-459 lie on the Cytoplasmic side of the membrane. The chain crosses the membrane as a helical span at residues Phe-460–Met-480. The Extracellular portion of the chain corresponds to Gly-481 to Thr-499. Heme b contacts are provided by Arg-484 and Arg-485. The chain crosses the membrane as a helical span at residues Ile-500–Phe-520. Residues Val-521–His-587 are Cytoplasmic-facing. Residues Met-588–Ser-608 form a helical membrane-spanning segment. Ala-609 is a topological domain (extracellular). A helical transmembrane segment spans residues Val-610–Ile-630. The Cytoplasmic portion of the chain corresponds to Lys-631–Asp-659.

This sequence belongs to the heme-copper respiratory oxidase family. In terms of assembly, the cytochrome bo(3) ubiquinol oxidase complex is a heterooctamer of two A chains, two B chains, two C chains and two D chains. Requires Cu(2+) as cofactor. Heme b is required as a cofactor. Fe(II)-heme o serves as cofactor.

Its subcellular location is the cell membrane. It catalyses the reaction 2 a ubiquinol + O2 + n H(+)(in) = 2 a ubiquinone + 2 H2O + n H(+)(out). Its function is as follows. Cytochrome bo(3) ubiquinol oxidase is the terminal enzyme in the aerobic respiratory chain. Catalyzes the four-electron reduction of O2 to water, using a ubiquinol as a membrane soluble electron donor for molecular oxygen reduction. Has proton pump activity across the membrane in addition to electron transfer, pumping 2 protons/electron and generating a proton motive force. All the redox centers of this enzyme complex are located within the largest subunit, subunit I. Protons are probably pumped via D- and K- channels found in this subunit. In Buchnera aphidicola subsp. Baizongia pistaciae (strain Bp), this protein is Cytochrome bo(3) ubiquinol oxidase subunit 1 (cyoB).